Here is a 62-residue protein sequence, read N- to C-terminus: DNA gyrase inhibitor YacG (62 aa).

Zn(2+) contacts are provided by Cys-9, Cys-12, Cys-27, and Cys-31. The span at Gly-43–Pro-52 shows a compositional bias: basic and acidic residues. A disordered region spans residues Gly-43 to Glu-62.

The protein belongs to the DNA gyrase inhibitor YacG family. Interacts with GyrB. It depends on Zn(2+) as a cofactor.

Inhibits all the catalytic activities of DNA gyrase by preventing its interaction with DNA. Acts by binding directly to the C-terminal domain of GyrB, which probably disrupts DNA binding by the gyrase. This Geobacter sp. (strain M21) protein is DNA gyrase inhibitor YacG.